Consider the following 1110-residue polypeptide: MADDGCSGLSDFITDDELFNEVTLNEVSDSQTGRPTKRRRLNSHEINTDSTGRREIEEAGTDSDTFDPSLPPNSKTTGRGRKSNDDNPAARKPKTYTPKYHVDQKPLFVTQTQPSSSPSRIRGPRWKAPERNKPSTVSKAKQKSPLPAIWGRKPSTIGSHGTNGKDIDAAIAASLRSFEEEQSARGDAEMLDDSIEEPGDTQVHATPGPVTNAEKETIFDFEDIPDDAFDFEPEFTETADKEPILISSQPRPSQNTTRRPTASQSTSFRQTTLLGGFASSSSKRSSQPATQTWPSSSRNEPPTHHELNKDALRTWIFPKNLGSRREYQFNIAHRALFHNLLVALPTGLGKTFIAATVMLNWFHWTKDAQIVFVAPTKPLVSQQVDACFHIAGIPRSQTTLLTGNTPPGVRAEEWRSKRVFFMTPQTIMNDLKTGIADPKRIVLLVVDEAHRATGAYAYVEIVKFLQRFNNSFRVLALTATPGATVEAVQEVIDGLSISRIEIRTEKSLDIRGFVHQRNVETITFENSRDMITSMELFAKALQPVVDRLRNQNAYWGRDPMALTPFGLTKARQEWNSSPAGRAASWPVKGTINSMFTVLASLAHAIDLLKYHGIGPFYRNLVSFEDSVLKEKKGGKCASQIVADGNFKVLMSKLRSWTNTEEFIGHPKLEYLRRAILNHFLDAGGKNGGDSEGSDSNTRVMIFSHFRDSAEEIVRVLRKHQPFVRPHVFVGQANAKGSEGMDQKTQLEVVGKFKTGTYNTIVATSIGEEGLDIGEVDLIICYDGHSSPIRMLQRMGRTGRKRAGNIILLLSKGKEEESYSKAKDSYEKMQQLIASGSRFTFHTDKSSRIVPQDIQPEAEEKMIEIPIENSQLGLPEPAKRSRAPKRPPKKFHMPDGVEKGFTKASRLGRTNTDSNGRSKRKRVVRTPSPELEEFPDLGDLCANQSQELADDPDFQEIAGKQIPRLRMDVYPEHQRSLRPTGFIEHGKYTRRVVKTFRKISKLGFDCEAQYRAIVGDPDDDGEGLEGLSTDREDDPQSVTAHQSREQPPRVEKRCGTEELSSLDIEAFFPNLAWPARPEAPRPESDGTDNRDQKPSQRKKRYMISDDSDVFE.

Over residues 24–34 the composition is skewed to polar residues; it reads LNEVSDSQTGR. Disordered stretches follow at residues 24–165, 178–212, and 236–305; these read LNEV…TNGK, FEEEQSARGDAEMLDDSIEEPGDTQVHATPGPVTN, and TETA…PTHH. Basic and acidic residues-rich tracts occupy residues 42-57 and 178-188; these read NSHEINTDSTGRREIE and FEEEQSARGDA. A compositionally biased stretch (acidic residues) spans 189-199; it reads EMLDDSIEEPG. Composition is skewed to polar residues over residues 246-273 and 287-300; these read ISSQPRPSQNTTRRPTASQSTSFRQTTL and QPATQTWPSSSRNE. One can recognise a Helicase ATP-binding domain in the interval 331–499; sequence IAHRALFHNL…EVIDGLSISR (169 aa). 344–351 is an ATP binding site; that stretch reads LPTGLGKT. The short motif at 447–450 is the DEAH box element; sequence DEAH. Residues 675 to 846 form the Helicase C-terminal domain; the sequence is ILNHFLDAGG…RFTFHTDKSS (172 aa). Disordered regions lie at residues 867-937, 1013-1055, and 1069-1110; these read ENSQ…PDLG, VGDP…RCGT, and NLAW…DVFE. Over residues 879 to 890 the composition is skewed to basic residues; sequence RSRAPKRPPKKF. Basic and acidic residues-rich tracts occupy residues 891-900, 1041-1055, and 1077-1093; these read HMPDGVEKGF, QSREQPPRVEKRCGT, and EAPRPESDGTDNRDQKP.

It belongs to the DEAD box helicase family. DEAH subfamily. FANCM sub-subfamily. Interacts with the MHF histone-fold complex to form the FANCM-MHF complex.

It is found in the nucleus. It catalyses the reaction ATP + H2O = ADP + phosphate + H(+). Its function is as follows. ATP-dependent DNA helicase involved in DNA damage repair by homologous recombination and in genome maintenance. Capable of unwinding D-loops. Plays a role in limiting crossover recombinants during mitotic DNA double-strand break (DSB) repair. Component of a FANCM-MHF complex which promotes gene conversion at blocked replication forks, probably by reversal of the stalled fork. The polypeptide is ATP-dependent DNA helicase MPH1 (Coccidioides immitis (strain RS) (Valley fever fungus)).